A 156-amino-acid polypeptide reads, in one-letter code: Cyanate hydratase (156 aa).

Catalysis depends on residues arginine 96, glutamate 99, and serine 122.

This sequence belongs to the cyanase family.

It catalyses the reaction cyanate + hydrogencarbonate + 3 H(+) = NH4(+) + 2 CO2. In terms of biological role, catalyzes the reaction of cyanate with bicarbonate to produce ammonia and carbon dioxide. The polypeptide is Cyanate hydratase (Pseudomonas aeruginosa (strain LESB58)).